The following is a 399-amino-acid chain: Enolase (399 aa).

Residue glutamine 149 coordinates (2R)-2-phosphoglycerate. Glutamate 191 (proton donor) is an active-site residue. Residues aspartate 227, glutamate 268, and aspartate 293 each coordinate Mg(2+). Lysine 318, arginine 347, serine 348, and lysine 369 together coordinate (2R)-2-phosphoglycerate. Lysine 318 acts as the Proton acceptor in catalysis.

The protein belongs to the enolase family. Requires Mg(2+) as cofactor.

The protein localises to the cytoplasm. The protein resides in the secreted. Its subcellular location is the cell surface. It carries out the reaction (2R)-2-phosphoglycerate = phosphoenolpyruvate + H2O. Its pathway is carbohydrate degradation; glycolysis; pyruvate from D-glyceraldehyde 3-phosphate: step 4/5. Functionally, catalyzes the reversible conversion of 2-phosphoglycerate (2-PG) into phosphoenolpyruvate (PEP). It is essential for the degradation of carbohydrates via glycolysis. The chain is Enolase from Archaeoglobus fulgidus (strain ATCC 49558 / DSM 4304 / JCM 9628 / NBRC 100126 / VC-16).